We begin with the raw amino-acid sequence, 443 residues long: Chromosomal replication initiator protein DnaA (443 aa).

A domain I, interacts with DnaA modulators region spans residues methionine 1–lysine 73. The domain II stretch occupies residues lysine 73 to serine 106. Positions threonine 107–serine 323 are domain III, AAA+ region. Glycine 151, glycine 153, lysine 154, and threonine 155 together coordinate ATP. The tract at residues asparagine 324–tyrosine 443 is domain IV, binds dsDNA.

The protein belongs to the DnaA family. As to quaternary structure, oligomerizes as a right-handed, spiral filament on DNA at oriC.

The protein localises to the cytoplasm. In terms of biological role, plays an essential role in the initiation and regulation of chromosomal replication. ATP-DnaA binds to the origin of replication (oriC) to initiate formation of the DNA replication initiation complex once per cell cycle. Binds the DnaA box (a 9 base pair repeat at the origin) and separates the double-stranded (ds)DNA. Forms a right-handed helical filament on oriC DNA; dsDNA binds to the exterior of the filament while single-stranded (ss)DNA is stabiized in the filament's interior. The ATP-DnaA-oriC complex binds and stabilizes one strand of the AT-rich DNA unwinding element (DUE), permitting loading of DNA polymerase. After initiation quickly degrades to an ADP-DnaA complex that is not apt for DNA replication. Binds acidic phospholipids. The protein is Chromosomal replication initiator protein DnaA of Thermoanaerobacter pseudethanolicus (strain ATCC 33223 / 39E) (Clostridium thermohydrosulfuricum).